The primary structure comprises 632 residues: Cyclic GMP-AMP synthase-like receptor 2 (632 aa).

Mg(2+) contacts are provided by Asp-71, Asp-73, and Asp-181. Residue Asp-295 participates in Mn(2+) binding.

This sequence belongs to the mab-21 family. Mg(2+) is required as a cofactor. The cofactor is Mn(2+).

Functionally, nucleotidyltransferase that catalyzes the formation of some cyclic nucleotide and plays a key role in innate immunity. Directly binds some unknown ligand, activating the nucleotidyltransferase activity, leading to synthesis of a second messenger that binds to and activates Sting, thereby triggering the immune response via activation of the NF-kappa-B transcription factor. The polypeptide is Cyclic GMP-AMP synthase-like receptor 2 (Crassostrea virginica (Eastern oyster)).